We begin with the raw amino-acid sequence, 167 residues long: Regulatory protein RecX (167 aa).

The disordered stretch occupies residues 19–49 (ESELRRKLASQPFSAKGHWGKQTGRSDNEPV).

Belongs to the RecX family.

The protein localises to the cytoplasm. In terms of biological role, modulates RecA activity. This is Regulatory protein RecX from Yersinia enterocolitica serotype O:8 / biotype 1B (strain NCTC 13174 / 8081).